Consider the following 632-residue polypeptide: DNA gyrase subunit B (632 aa).

The 115-residue stretch at 419 to 533 (RELFIVEGES…SGYLYIAQPP (115 aa)) folds into the Toprim domain. The Mg(2+) site is built by Glu425, Asp498, and Asp500.

Belongs to the type II topoisomerase GyrB family. In terms of assembly, heterotetramer, composed of two GyrA and two GyrB chains. In the heterotetramer, GyrA contains the active site tyrosine that forms a transient covalent intermediate with DNA, while GyrB binds cofactors and catalyzes ATP hydrolysis. Mg(2+) serves as cofactor. Requires Mn(2+) as cofactor. The cofactor is Ca(2+).

Its subcellular location is the cytoplasm. The catalysed reaction is ATP-dependent breakage, passage and rejoining of double-stranded DNA.. In terms of biological role, a type II topoisomerase that negatively supercoils closed circular double-stranded (ds) DNA in an ATP-dependent manner to modulate DNA topology and maintain chromosomes in an underwound state. Negative supercoiling favors strand separation, and DNA replication, transcription, recombination and repair, all of which involve strand separation. Also able to catalyze the interconversion of other topological isomers of dsDNA rings, including catenanes and knotted rings. Type II topoisomerases break and join 2 DNA strands simultaneously in an ATP-dependent manner. In Archaeoglobus fulgidus (strain ATCC 49558 / DSM 4304 / JCM 9628 / NBRC 100126 / VC-16), this protein is DNA gyrase subunit B.